The chain runs to 309 residues: MYNGVLLLHKPVGMTSHDCVMKIRKLLKTKKVGHTGTLDPEVSGVLPICVGRATKIVEYLTEKSKTYDAEVTLGCSTETEDQTGEVTEKKPVLAPPDEQTVQSVLRSLEGTIEQVPPMYSAVKVGGKKLYEYARAGIEVERPKRTITIHHIELTSEIRHEGDKARFRFVVTCSKGTYVRTLAVTIGEKLGYPAHMSNLVRTASGPFTLDECLTFEDVEGLIADGTLSEKLVPIERALDHLPKWIISDTLAKKVENGAVLETPGSFSHLTSEDRIAVFTEAGRCTAVYYPHPTKTGLLKPAKVLVQKSEQ.

Residue D39 is the Nucleophile of the active site.

Belongs to the pseudouridine synthase TruB family. Type 1 subfamily.

It catalyses the reaction uridine(55) in tRNA = pseudouridine(55) in tRNA. Its function is as follows. Responsible for synthesis of pseudouridine from uracil-55 in the psi GC loop of transfer RNAs. In Bacillus licheniformis (strain ATCC 14580 / DSM 13 / JCM 2505 / CCUG 7422 / NBRC 12200 / NCIMB 9375 / NCTC 10341 / NRRL NRS-1264 / Gibson 46), this protein is tRNA pseudouridine synthase B.